The chain runs to 494 residues: Glutamyl-tRNA(Gln) amidotransferase subunit A (494 aa).

Active-site charge relay system residues include Lys-88 and Ser-163. The Acyl-ester intermediate role is filled by Ser-187.

This sequence belongs to the amidase family. GatA subfamily. As to quaternary structure, heterotrimer of A, B and C subunits.

The catalysed reaction is L-glutamyl-tRNA(Gln) + L-glutamine + ATP + H2O = L-glutaminyl-tRNA(Gln) + L-glutamate + ADP + phosphate + H(+). Its function is as follows. Allows the formation of correctly charged Gln-tRNA(Gln) through the transamidation of misacylated Glu-tRNA(Gln) in organisms which lack glutaminyl-tRNA synthetase. The reaction takes place in the presence of glutamine and ATP through an activated gamma-phospho-Glu-tRNA(Gln). The protein is Glutamyl-tRNA(Gln) amidotransferase subunit A of Corynebacterium diphtheriae (strain ATCC 700971 / NCTC 13129 / Biotype gravis).